A 648-amino-acid chain; its full sequence is Activatory protein CHA4 (648 aa).

Positions 1-10 are enriched in pro residues; it reads MMLEPSPPPL. The interval 1–37 is disordered; the sequence is MMLEPSPPPLTTTVTPSLPSSLKKSVTDNDQNNNNVP. Residues 11-22 show a composition bias toward low complexity; the sequence is TTTVTPSLPSSL. Positions 44 to 70 form a DNA-binding region, zn(2)-C6 fungal-type; sequence CQNCRRRRRKCNMEKPCSNCIKFRTEC. A disordered region spans residues 140-177; it reads AQSALPSSESNDENESDAFTKKMPSESPPPVGTNSIYP. Phosphoserine is present on residues serine 164 and serine 166.

The protein resides in the nucleus. Its function is as follows. Activates the CHA1 gene for L-serine dehydratase. Binds to the DNA sequence 5'-GVGGARAYRTRATTCCRC-3'. This is Activatory protein CHA4 (CHA4) from Saccharomyces cerevisiae (strain ATCC 204508 / S288c) (Baker's yeast).